Consider the following 112-residue polypeptide: C-type natriuretic peptide 3 (112 aa).

A signal peptide spans Met1–Ala19. A propeptide spanning residues Arg20–Lys90 is cleaved from the precursor. Positions Gln33–Glu67 are disordered. A compositionally biased stretch (basic and acidic residues) spans Glu40–Pro54. Cysteines 96 and 112 form a disulfide.

Belongs to the natriuretic peptide family. Spinal cord, kidney, ovary, heart and spleen, and to a lower extent in brain and liver.

Its subcellular location is the secreted. Its function is as follows. Exhibits natriuretic and vasodepressant activity. Has cGMP-stimulating activity. May help to regulate body fluid homeostasis in a variety of aquatic environments. The polypeptide is C-type natriuretic peptide 3 (Oryzias latipes (Japanese rice fish)).